Here is a 521-residue protein sequence, read N- to C-terminus: Importin subunit alpha-3 (521 aa).

Ala-2 bears the N-acetylalanine mark. The 57-residue stretch at 2–58 folds into the IBB domain; sequence ADNEKLDNQRLKNFKNKGRDLETMRRQRNEVVVELRKNKRDEHLLKRRNVPQEDICE. The short motif at 43 to 52 is the Nuclear localization signal element; that stretch reads EHLLKRRNVP. Ser-60 is subject to Phosphoserine. The ARM 1; truncated repeat unit spans residues 66-106; the sequence is YRVQNTSLEAIVQNASSDNQGIQLSAVQAARKLLSSDRNPP. 8 ARM repeats span residues 107–149, 150–194, 195–233, 234–278, 279–318, 319–360, 361–400, and 401–443; these read IDDL…TSEQ, TQAV…CRDY, VISL…HKDP, PPPM…EQIQ, MVID…TDEQ, TQVV…NQQQ, VQAV…ISGR, and KDQV…KMAE. Residues 137–229 form an NLS binding site (major) region; the sequence is WALTNIASGT…VTWVMVNLCR (93 aa). The tract at residues 306 to 394 is NLS binding site (minor); that stretch reads RAVGNIVTGT…QKEAAWAISN (89 aa). An ARM 10; atypical repeat occupies 447–485; it reads ETIANLIEECGGLEKIEQLQNHENEDIYKLAYEIIDQFF.

This sequence belongs to the importin alpha family. Forms a complex with importin subunit beta-1 (KPNB1). Interacts with SNAI1. Interacts with TALDO1 isoform 1. Interacts with CYB1. As to expression, detected more or less in all tissues examined (Ehrlich ascites tumor cells, testis, kidney, spleen, liver, heart, lung, thymus, skeletal muscle, cerebellum and brain (without cerebellum)). Multiple-sized transcripts were highly expressed, especially in testis.

The protein localises to the cytoplasm. The protein resides in the nucleus. Functions in nuclear protein import as an adapter protein for nuclear receptor KPNB1. Binds specifically and directly to substrates containing either a simple or bipartite NLS motif. Docking of the importin/substrate complex to the nuclear pore complex (NPC) is mediated by KPNB1 through binding to nucleoporin FxFG repeats and the complex is subsequently translocated through the pore by an energy requiring, Ran-dependent mechanism. At the nucleoplasmic side of the NPC, Ran binds to importin-beta and the three components separate and importin-alpha and -beta are re-exported from the nucleus to the cytoplasm where GTP hydrolysis releases Ran from importin. The directionality of nuclear import is thought to be conferred by an asymmetric distribution of the GTP- and GDP-bound forms of Ran between the cytoplasm and nucleus. Mediates nuclear import of AARS1, MRTFA and RANBP3. This is Importin subunit alpha-3 (Kpna4) from Mus musculus (Mouse).